Here is a 126-residue protein sequence, read N- to C-terminus: Protein C10 (126 aa).

Ala2 carries the post-translational modification N-acetylalanine.

The protein belongs to the UPF0456 family. In terms of tissue distribution, ubiquitously expressed, with higher expression in lung.

It is found in the cytoplasm. In terms of biological role, in brain, may be required for corpus callosum development. The chain is Protein C10 (Grcc10) from Mus musculus (Mouse).